The sequence spans 204 residues: Peptidyl-tRNA hydrolase (204 aa).

Position 19 (Tyr-19) interacts with tRNA. The Proton acceptor role is filled by His-24. The tRNA site is built by Tyr-70, Asn-72, and Asn-118.

The protein belongs to the PTH family. In terms of assembly, monomer.

Its subcellular location is the cytoplasm. It catalyses the reaction an N-acyl-L-alpha-aminoacyl-tRNA + H2O = an N-acyl-L-amino acid + a tRNA + H(+). Functionally, hydrolyzes ribosome-free peptidyl-tRNAs (with 1 or more amino acids incorporated), which drop off the ribosome during protein synthesis, or as a result of ribosome stalling. In terms of biological role, catalyzes the release of premature peptidyl moieties from peptidyl-tRNA molecules trapped in stalled 50S ribosomal subunits, and thus maintains levels of free tRNAs and 50S ribosomes. In Prochlorococcus marinus (strain SARG / CCMP1375 / SS120), this protein is Peptidyl-tRNA hydrolase.